The chain runs to 59 residues: Large ribosomal subunit protein bL32 (59 aa).

The segment at 1–59 (MAVQQNKKSPSKRGMHRSHDFLTTAPIAVEPTTGEVHLRHHVSPNGYYRGRKVVKTKND) is disordered. Residues 49–59 (RGRKVVKTKND) show a composition bias toward basic residues.

Belongs to the bacterial ribosomal protein bL32 family.

The polypeptide is Large ribosomal subunit protein bL32 (Ralstonia pickettii (strain 12J)).